Reading from the N-terminus, the 557-residue chain is Dihydroxy-acid dehydratase (557 aa).

Aspartate 78 provides a ligand contact to Mg(2+). A [2Fe-2S] cluster-binding site is contributed by cysteine 119. Mg(2+) contacts are provided by aspartate 120 and lysine 121. An N6-carboxylysine modification is found at lysine 121. [2Fe-2S] cluster is bound at residue cysteine 191. Glutamate 442 provides a ligand contact to Mg(2+). The active-site Proton acceptor is serine 468.

Belongs to the IlvD/Edd family. In terms of assembly, homodimer. Requires [2Fe-2S] cluster as cofactor. It depends on Mg(2+) as a cofactor.

The catalysed reaction is (2R)-2,3-dihydroxy-3-methylbutanoate = 3-methyl-2-oxobutanoate + H2O. The enzyme catalyses (2R,3R)-2,3-dihydroxy-3-methylpentanoate = (S)-3-methyl-2-oxopentanoate + H2O. Its pathway is amino-acid biosynthesis; L-isoleucine biosynthesis; L-isoleucine from 2-oxobutanoate: step 3/4. It participates in amino-acid biosynthesis; L-valine biosynthesis; L-valine from pyruvate: step 3/4. In terms of biological role, functions in the biosynthesis of branched-chain amino acids. Catalyzes the dehydration of (2R,3R)-2,3-dihydroxy-3-methylpentanoate (2,3-dihydroxy-3-methylvalerate) into 2-oxo-3-methylpentanoate (2-oxo-3-methylvalerate) and of (2R)-2,3-dihydroxy-3-methylbutanoate (2,3-dihydroxyisovalerate) into 2-oxo-3-methylbutanoate (2-oxoisovalerate), the penultimate precursor to L-isoleucine and L-valine, respectively. The protein is Dihydroxy-acid dehydratase of Lachnoclostridium phytofermentans (strain ATCC 700394 / DSM 18823 / ISDg) (Clostridium phytofermentans).